A 222-amino-acid chain; its full sequence is Uracil-DNA glycosylase (222 aa).

Catalysis depends on aspartate 61, which acts as the Proton acceptor.

Belongs to the uracil-DNA glycosylase (UDG) superfamily. UNG family.

The protein resides in the cytoplasm. The catalysed reaction is Hydrolyzes single-stranded DNA or mismatched double-stranded DNA and polynucleotides, releasing free uracil.. Functionally, excises uracil residues from the DNA which can arise as a result of misincorporation of dUMP residues by DNA polymerase or due to deamination of cytosine. This chain is Uracil-DNA glycosylase, found in Aeromonas salmonicida (strain A449).